The following is a 35-amino-acid chain: Purotoxin-1 (35 aa).

4 cysteine pairs are disulfide-bonded: Cys-3/Cys-16, Cys-10/Cys-21, Cys-15/Cys-32, and Cys-23/Cys-30.

Belongs to the neurotoxin 33 family. In terms of tissue distribution, expressed by the venom gland.

The protein resides in the secreted. Inhibits P2RX3 receptors. Has an analgesic effect in rat. Enhances the high-affinity desensitization of P2RX3 purinoceptors. At 50 nM, decreases the IC(50) for ambient ATP from 46.5 nM to 12.7 nM in mouse P2RX3. The polypeptide is Purotoxin-1 (Alopecosa marikovskyi (Wolf spider)).